The primary structure comprises 373 residues: Gibberellin 3-beta-dioxygenase 2 (373 aa).

Residues 203–304 form the Fe2OG dioxygenase domain; sequence MTATVHLNWY…RVSLGYFLGP (102 aa). Position 212 (Tyr212) interacts with 2-oxoglutarate. His227, Asp229, and His285 together coordinate Fe cation. Positions 295 and 297 each coordinate 2-oxoglutarate.

This sequence belongs to the iron/ascorbate-dependent oxidoreductase family. The cofactor is L-ascorbate. Fe(2+) serves as cofactor. In terms of tissue distribution, highly expressed in elongating leaves. Expressed in unopened flowers. Expressed at low levels in leaf blades, shoots, rachis, stems and young panicles.

It carries out the reaction gibberellin A20 + 2-oxoglutarate + O2 = gibberellin A1 + succinate + CO2. It functions in the pathway plant hormone biosynthesis; gibberellin biosynthesis. Its function is as follows. Catalyzes the 3-beta-hydroxylation of the inactive gibberellin precursors, leading to the formation of bioactive gibberellins. In vitro, converts the precursors GA20, GA5, GA44 and GA9 to the corresponding 3-beta-hydroxylated active products GA1, GA3, GA38 and GA4, respectively. Involved in the production of bioactive GA for vegetative growth and development. Controls the elongation of the vegetative shoot and plant height by the regulation of active gibberellin levels. The chain is Gibberellin 3-beta-dioxygenase 2 from Oryza sativa subsp. japonica (Rice).